A 996-amino-acid polypeptide reads, in one-letter code: Poly [ADP-ribose] polymerase (996 aa).

Residues 1–369 (MEIDLPFKVE…TSTILKNISL (369 aa)) mediate DNA binding. 2 PARP-type zinc fingers span residues 7–89 (FKVE…DNCT) and 114–203 (FGIE…PVIK). Cys19, Cys22, His51, Cys54, Cys126, Cys129, His161, and Cys164 together coordinate Zn(2+). 2 consecutive short sequence motifs (nuclear localization signal) follow at residues 211-214 (KKAK) and 232-235 (KIKK). A PADR1 zinc-binding domain is found at 220 to 358 (EEDAASIKEL…EVRAIRYIPP (139 aa)). Positions 286–329 (GALLPCTDCKGRQLLFHKSGYLCNGDLTEWTKCTKLLKEPERKS) are zinc ribbon. Cys291, Cys294, Cys308, and Cys318 together coordinate Zn(2+). Residues 370–507 (KKGDELDGPK…SIYTKSVPKS (138 aa)) are automodification domain. One can recognise a BRCT domain in the interval 382 to 473 (RERPPLYNIE…AGAINYISSM (92 aa)). Residues 527–625 (VAHVYVSRNK…ENFVKVAGRM (99 aa)) form the WGR domain. Positions 647-764 (KSKLPLSVQD…EIECAYSLLQ (118 aa)) constitute a PARP alpha-helical domain. Residues 773–996 (NPIDKHYEQL…YMLRMNFKYK (224 aa)) enclose the PARP catalytic domain.

The protein belongs to the ARTD/PARP family.

It is found in the nucleus. The enzyme catalyses NAD(+) + (ADP-D-ribosyl)n-acceptor = nicotinamide + (ADP-D-ribosyl)n+1-acceptor + H(+).. It catalyses the reaction L-aspartyl-[protein] + NAD(+) = 4-O-(ADP-D-ribosyl)-L-aspartyl-[protein] + nicotinamide. The catalysed reaction is L-glutamyl-[protein] + NAD(+) = 5-O-(ADP-D-ribosyl)-L-glutamyl-[protein] + nicotinamide. In terms of biological role, poly-ADP-ribosyltransferase that mediates poly-ADP-ribosylation of proteins and plays a key role in DNA repair. Mainly mediates glutamate and aspartate ADP-ribosylation of target proteins: the ADP-D-ribosyl group of NAD(+) is transferred to the acceptor carboxyl group of glutamate and aspartate residues and further ADP-ribosyl groups are transferred to the 2'-position of the terminal adenosine moiety, building up a polymer with an average chain length of 20-30 units. The polypeptide is Poly [ADP-ribose] polymerase (Sarcophaga peregrina (Flesh fly)).